The following is a 406-amino-acid chain: L-carnitine CoA-transferase (406 aa).

CoA contacts are provided by Lys98 and Arg105. Asp170 functions as the Nucleophile in the catalytic mechanism.

The protein belongs to the CoA-transferase III family. CaiB subfamily. In terms of assembly, homodimer.

The protein resides in the cytoplasm. It carries out the reaction crotonobetainyl-CoA + (R)-carnitine = crotonobetaine + (R)-carnitinyl-CoA. The enzyme catalyses 4-(trimethylamino)butanoyl-CoA + (R)-carnitine = (R)-carnitinyl-CoA + 4-(trimethylamino)butanoate. The protein operates within amine and polyamine metabolism; carnitine metabolism. Functionally, catalyzes the reversible transfer of the CoA moiety from gamma-butyrobetainyl-CoA to L-carnitine to generate L-carnitinyl-CoA and gamma-butyrobetaine. Is also able to catalyze the reversible transfer of the CoA moiety from gamma-butyrobetainyl-CoA or L-carnitinyl-CoA to crotonobetaine to generate crotonobetainyl-CoA. The sequence is that of L-carnitine CoA-transferase from Proteus mirabilis (strain HI4320).